The following is a 72-amino-acid chain: Sperm protein associated with the nucleus on the X chromosome N1 (72 aa).

A disordered region spans residues 1–44; that stretch reads MEQPTSSINGEKRKSPCESNNENDEMQETPNRDLAPEPSLKKMK.

Belongs to the SPAN-X family.

In Homo sapiens (Human), this protein is Sperm protein associated with the nucleus on the X chromosome N1 (SPANXN1).